Here is a 187-residue protein sequence, read N- to C-terminus: POM121 and ZP3 fusion protein (187 aa).

Residues 166 to 187 are disordered; it reads GTPSHSRRQPRVVSQWSTSASL. Over residues 177–187 the composition is skewed to polar residues; the sequence is VVSQWSTSASL.

As to expression, expressed in spleen, thymus, pancreas, testis, ovary, small intestine, colon and lymphocytes.

This Homo sapiens (Human) protein is POM121 and ZP3 fusion protein (POMZP3).